We begin with the raw amino-acid sequence, 411 residues long: Acetylornithine aminotransferase, mitochondrial (411 aa).

Position 262 is an N6-(pyridoxal phosphate)lysine (lysine 262).

The protein belongs to the class-III pyridoxal-phosphate-dependent aminotransferase family. Pyridoxal 5'-phosphate is required as a cofactor.

Its subcellular location is the mitochondrion matrix. It carries out the reaction N(2)-acetyl-L-ornithine + 2-oxoglutarate = N-acetyl-L-glutamate 5-semialdehyde + L-glutamate. Its pathway is amino-acid biosynthesis; L-arginine biosynthesis; N(2)-acetyl-L-ornithine from L-glutamate: step 4/4. This is Acetylornithine aminotransferase, mitochondrial (ARG8) from Yarrowia lipolytica (strain CLIB 122 / E 150) (Yeast).